We begin with the raw amino-acid sequence, 101 residues long: NAD(P)H-quinone oxidoreductase subunit 4L, chloroplastic (101 aa).

The next 3 membrane-spanning stretches (helical) occupy residues 2-22, 32-52, and 61-81; these read MLEH…YGLI, MCLE…SDFF, and IFSI…LAIV.

It belongs to the complex I subunit 4L family. As to quaternary structure, NDH is composed of at least 16 different subunits, 5 of which are encoded in the nucleus.

It is found in the plastid. The protein resides in the chloroplast thylakoid membrane. It catalyses the reaction a plastoquinone + NADH + (n+1) H(+)(in) = a plastoquinol + NAD(+) + n H(+)(out). The catalysed reaction is a plastoquinone + NADPH + (n+1) H(+)(in) = a plastoquinol + NADP(+) + n H(+)(out). Functionally, NDH shuttles electrons from NAD(P)H:plastoquinone, via FMN and iron-sulfur (Fe-S) centers, to quinones in the photosynthetic chain and possibly in a chloroplast respiratory chain. The immediate electron acceptor for the enzyme in this species is believed to be plastoquinone. Couples the redox reaction to proton translocation, and thus conserves the redox energy in a proton gradient. The polypeptide is NAD(P)H-quinone oxidoreductase subunit 4L, chloroplastic (Daucus carota (Wild carrot)).